The sequence spans 327 residues: tRNA pseudouridine synthase B (327 aa).

The active-site Nucleophile is Asp69. The substrate site is built by Tyr97, Tyr201, and Leu222.

Belongs to the pseudouridine synthase TruB family. Type 1 subfamily.

It catalyses the reaction uridine(55) in tRNA = pseudouridine(55) in tRNA. In terms of biological role, responsible for synthesis of pseudouridine from uracil-55 in the psi GC loop of transfer RNAs. The sequence is that of tRNA pseudouridine synthase B from Wigglesworthia glossinidia brevipalpis.